We begin with the raw amino-acid sequence, 140 residues long: Large ribosomal subunit protein uL14 (140 aa).

This sequence belongs to the universal ribosomal protein uL14 family. In terms of assembly, component of the large ribosomal subunit.

It is found in the cytoplasm. In terms of biological role, component of the large ribosomal subunit. The ribosome is a large ribonucleoprotein complex responsible for the synthesis of proteins in the cell. In Danio rerio (Zebrafish), this protein is Large ribosomal subunit protein uL14 (rpl23).